Here is a 271-residue protein sequence, read N- to C-terminus: 4-hydroxy-tetrahydrodipicolinate reductase (271 aa).

NAD(+)-binding positions include 10-15 (GAGGRM), glutamate 36, 100-102 (GTT), and 124-127 (SGNM). Histidine 157 functions as the Proton donor/acceptor in the catalytic mechanism. Histidine 158 lines the (S)-2,3,4,5-tetrahydrodipicolinate pocket. Lysine 161 serves as the catalytic Proton donor. 167 to 168 (GT) contributes to the (S)-2,3,4,5-tetrahydrodipicolinate binding site.

It belongs to the DapB family.

The protein localises to the cytoplasm. It carries out the reaction (S)-2,3,4,5-tetrahydrodipicolinate + NAD(+) + H2O = (2S,4S)-4-hydroxy-2,3,4,5-tetrahydrodipicolinate + NADH + H(+). The enzyme catalyses (S)-2,3,4,5-tetrahydrodipicolinate + NADP(+) + H2O = (2S,4S)-4-hydroxy-2,3,4,5-tetrahydrodipicolinate + NADPH + H(+). Its pathway is amino-acid biosynthesis; L-lysine biosynthesis via DAP pathway; (S)-tetrahydrodipicolinate from L-aspartate: step 4/4. In terms of biological role, catalyzes the conversion of 4-hydroxy-tetrahydrodipicolinate (HTPA) to tetrahydrodipicolinate. The protein is 4-hydroxy-tetrahydrodipicolinate reductase of Rhodopseudomonas palustris (strain ATCC BAA-98 / CGA009).